The following is a 552-amino-acid chain: Glutamine--tRNA ligase (552 aa).

The 'HIGH' region signature appears at P34–H44. ATP-binding positions include E35–N37 and H41–S47. 2 residues coordinate L-glutamine: D67 and Y212. ATP-binding positions include T231, R261–L262, and M269–K271. The 'KMSKS' region motif lies at V268 to R272.

Belongs to the class-I aminoacyl-tRNA synthetase family. As to quaternary structure, monomer.

It is found in the cytoplasm. The enzyme catalyses tRNA(Gln) + L-glutamine + ATP = L-glutaminyl-tRNA(Gln) + AMP + diphosphate. The sequence is that of Glutamine--tRNA ligase from Aliivibrio fischeri (strain MJ11) (Vibrio fischeri).